A 155-amino-acid chain; its full sequence is 17.6 kDa class I heat shock protein 1 (155 aa).

The region spanning 39–154 (SSSAIANARV…KAQVKSIDIS (116 aa)) is the sHSP domain.

The protein belongs to the small heat shock protein (HSP20) family. In terms of assembly, forms oligomeric structures. Binds to AKR2A.

It localises to the cytoplasm. Functionally, possesses chaperone activity. This Arabidopsis thaliana (Mouse-ear cress) protein is 17.6 kDa class I heat shock protein 1 (HSP17.6A).